The chain runs to 209 residues: Small ribosomal subunit protein uS3 (209 aa).

One can recognise a KH type-2 domain in the interval 38-107; it reads IRNFIKKNYN…KFGIDIIELK (70 aa).

It belongs to the universal ribosomal protein uS3 family. Part of the 30S ribosomal subunit. Forms a tight complex with proteins S10 and S14.

In terms of biological role, binds the lower part of the 30S subunit head. Binds mRNA in the 70S ribosome, positioning it for translation. This is Small ribosomal subunit protein uS3 from Fervidobacterium nodosum (strain ATCC 35602 / DSM 5306 / Rt17-B1).